We begin with the raw amino-acid sequence, 236 residues long: Peptidase E (236 aa).

Residues Ser-122, Asp-137, and His-159 each act as charge relay system in the active site.

Belongs to the peptidase S51 family.

Its subcellular location is the cytoplasm. It catalyses the reaction Dipeptidase E catalyzes the hydrolysis of dipeptides Asp-|-Xaa. It does not act on peptides with N-terminal Glu, Asn or Gln, nor does it cleave isoaspartyl peptides.. Its function is as follows. Hydrolyzes dipeptides containing N-terminal aspartate residues. May play a role in allowing the cell to use peptide aspartate to spare carbon otherwise required for the synthesis of the aspartate family of amino acids. This is Peptidase E from Shewanella putrefaciens (strain CN-32 / ATCC BAA-453).